A 516-amino-acid chain; its full sequence is GMP synthase [glutamine-hydrolyzing] (516 aa).

In terms of domain architecture, Glutamine amidotransferase type-1 spans 8-198 (KILILDFGSQ…VVNICGCDTL (191 aa)). C84 serves as the catalytic Nucleophile. Active-site residues include H172 and E174. In terms of domain architecture, GMPS ATP-PPase spans 199–391 (WNIENIIEND…LGLPYNMLYR (193 aa)). 226–232 (SGGVDSS) lines the ATP pocket.

As to quaternary structure, homodimer.

It catalyses the reaction XMP + L-glutamine + ATP + H2O = GMP + L-glutamate + AMP + diphosphate + 2 H(+). The protein operates within purine metabolism; GMP biosynthesis; GMP from XMP (L-Gln route): step 1/1. Functionally, catalyzes the synthesis of GMP from XMP. In Francisella tularensis subsp. mediasiatica (strain FSC147), this protein is GMP synthase [glutamine-hydrolyzing].